The sequence spans 27 residues: NADH-ubiquinone oxidoreductase chain 1 (27 aa).

The chain crosses the membrane as a helical span at residues 3-23 (LIFPLVGSLLLVICVMVGVAF).

It belongs to the complex I subunit 1 family.

It localises to the mitochondrion inner membrane. It catalyses the reaction a ubiquinone + NADH + 5 H(+)(in) = a ubiquinol + NAD(+) + 4 H(+)(out). Functionally, core subunit of the mitochondrial membrane respiratory chain NADH dehydrogenase (Complex I) that is believed to belong to the minimal assembly required for catalysis. Complex I functions in the transfer of electrons from NADH to the respiratory chain. The immediate electron acceptor for the enzyme is believed to be ubiquinone. In Simulium vittatum (Striped black fly), this protein is NADH-ubiquinone oxidoreductase chain 1 (ND1).